Reading from the N-terminus, the 446-residue chain is Phosphoglucosamine mutase (446 aa).

The active-site Phosphoserine intermediate is the serine 102. Mg(2+) is bound by residues serine 102, aspartate 241, aspartate 243, and aspartate 245. A Phosphoserine modification is found at serine 102.

The protein belongs to the phosphohexose mutase family. Requires Mg(2+) as cofactor. Post-translationally, activated by phosphorylation.

It carries out the reaction alpha-D-glucosamine 1-phosphate = D-glucosamine 6-phosphate. Its function is as follows. Catalyzes the conversion of glucosamine-6-phosphate to glucosamine-1-phosphate. The chain is Phosphoglucosamine mutase from Xylella fastidiosa (strain M23).